A 148-amino-acid chain; its full sequence is UPF0756 membrane protein YeaL (148 aa).

The next 4 membrane-spanning stretches (helical) occupy residues 14–34, 51–71, 86–106, and 121–141; these read ALGF…LIIV, LTVG…SGTL, LVAI…ITLM, and VLGV…AGLV.

It belongs to the UPF0756 family.

The protein resides in the cell membrane. The chain is UPF0756 membrane protein YeaL from Salmonella choleraesuis (strain SC-B67).